A 176-amino-acid polypeptide reads, in one-letter code: Crossover junction endodeoxyribonuclease RuvC (176 aa).

Active-site residues include Asp-7, Glu-67, and Asp-139. Mg(2+) contacts are provided by Asp-7, Glu-67, and Asp-139.

It belongs to the RuvC family. Homodimer which binds Holliday junction (HJ) DNA. The HJ becomes 2-fold symmetrical on binding to RuvC with unstacked arms; it has a different conformation from HJ DNA in complex with RuvA. In the full resolvosome a probable DNA-RuvA(4)-RuvB(12)-RuvC(2) complex forms which resolves the HJ. Mg(2+) serves as cofactor.

Its subcellular location is the cytoplasm. It carries out the reaction Endonucleolytic cleavage at a junction such as a reciprocal single-stranded crossover between two homologous DNA duplexes (Holliday junction).. In terms of biological role, the RuvA-RuvB-RuvC complex processes Holliday junction (HJ) DNA during genetic recombination and DNA repair. Endonuclease that resolves HJ intermediates. Cleaves cruciform DNA by making single-stranded nicks across the HJ at symmetrical positions within the homologous arms, yielding a 5'-phosphate and a 3'-hydroxyl group; requires a central core of homology in the junction. The consensus cleavage sequence is 5'-(A/T)TT(C/G)-3'. Cleavage occurs on the 3'-side of the TT dinucleotide at the point of strand exchange. HJ branch migration catalyzed by RuvA-RuvB allows RuvC to scan DNA until it finds its consensus sequence, where it cleaves and resolves the cruciform DNA. This is Crossover junction endodeoxyribonuclease RuvC from Pelobacter propionicus (strain DSM 2379 / NBRC 103807 / OttBd1).